A 603-amino-acid chain; its full sequence is Nuclear receptor subfamily 2 group C member 1 (603 aa).

Residues 1–178 (MATIEEIAHQ…RLQRCIAFGM (178 aa)) are required for interaction with KAT2B. Residues 110–185 (FDLCVVCGDK…FGMKQDSVQC (76 aa)) constitute a DNA-binding region (nuclear receptor). 2 consecutive NR C4-type zinc fingers follow at residues 113-133 (CVVC…CEGC) and 149-168 (CRGS…CQYC). Residues serine 197 and serine 215 each carry the phosphoserine modification. At threonine 220 the chain carries Phosphothreonine. Threonine 222 carries the post-translational modification Phosphothreonine; by MAPK1. Lysine 250 participates in a covalent cross-link: Glycyl lysine isopeptide (Lys-Gly) (interchain with G-Cter in SUMO); alternate. Lysine 250 participates in a covalent cross-link: Glycyl lysine isopeptide (Lys-Gly) (interchain with G-Cter in SUMO2); alternate. Positions 348–590 (GSVHLITGDS…SVIPHILKME (243 aa)) constitute an NR LBD domain. At serine 581 the chain carries Phosphoserine; by PKC. Residues 584 to 603 (PHILKMEPADYNSQIIGHSI) are required for interaction with NRIP1. Residue lysine 588 forms a Glycyl lysine isopeptide (Lys-Gly) (interchain with G-Cter in SUMO2) linkage.

Belongs to the nuclear hormone receptor family. NR2 subfamily. Homodimer. Heterodimer; binds DNA as a heterodimer with NR2C2 required for chromatin remodeling and for binding to promoter regions such as globin DR1 repeats. Interacts with ESR1; the interaction prevents homodimerization of ESR1 and suppresses its transcriptional activity and cell growth. Interacts with NRIP1 (via its LXXLL motifs); the interaction provides corepressor activity. Interacts with HDAC3 (via the DNA-binding domain). Interacts with HDAC4 (via the DNA-binding domain). Interacts with PIAS1; the interaction is required for sumoylation of NR2C1. Interacts with UBE2I; the interaction is required for sumoylation of NR2C1. Interacts with KAT2B; the interaction acts as a corepressor of gene expression. Post-translationally, sumoylation requires both PIAS1 and UBE2I. Sumoylation appears to dissociate NR2C1 from the PML nuclear bodies. Enhances the interaction with NRIP1 but inhibits interaction with KAT2B. In proliferating cells, stimulation by all-trans retinoic acid, activation of MAPK1-mediated phosphorylation and recruitment to PML bodies with subsequent sumoylation, suppresses OCT4 expression. Phosphorylated on several serine and threonine residues. Phosphorylation on Thr-220, stimulated by all-trans retinoic acid (atRA) mediates PML location and sumoylation in proliferating cells which then modulates its association with effector molecules, KAT2B and NRIP1. Phosphorylation on Ser-581 by PKC is important for protein stability and function as activator of RARB.

It localises to the nucleus. It is found in the PML body. Functionally, orphan nuclear receptor. Binds the IR7 element in the promoter of its own gene in an autoregulatory negative feedback mechanism. Primarily repressor of a broad range of genes. Binds to hormone response elements (HREs) consisting of two 5'-AGGTCA-3' half site direct repeat consensus sequences. Together with NR2C2, forms the core of the DRED (direct repeat erythroid-definitive) complex that represses embryonic and fetal globin transcription. Also activator of OCT4 gene expression. May be involved in stem cell proliferation and differentiation. Mediator of retinoic acid-regulated preadipocyte proliferation. The protein is Nuclear receptor subfamily 2 group C member 1 (NR2C1) of Macaca fascicularis (Crab-eating macaque).